The following is a 223-amino-acid chain: DNA-directed RNA polymerase III subunit RPC7 (223 aa).

Positions 110–223 (MMPRNKCKKA…SDDNMDEATY (114 aa)) are disordered. Basic residues predominate over residues 114–125 (NKCKKAGPKPKK). Threonine 133 carries the post-translational modification Phosphothreonine. Residues 140–155 (DVLKKMEELEKRGDGE) show a composition bias toward basic and acidic residues. Serine 157 is subject to Phosphoserine. The segment covering 164–173 (KEGSKEKSKE) has biased composition (basic and acidic residues). 2 stretches are compositionally biased toward acidic residues: residues 174–198 (GDDDDDDDAAEQEEYDEEEQEEEND) and 205–223 (EDGDDFGADSDDNMDEATY).

It belongs to the eukaryotic RPC7 RNA polymerase subunit family. As to quaternary structure, component of the RNA polymerase III complex consisting of 17 subunits: a ten-subunit horseshoe-shaped catalytic core composed of POLR3A/RPC1, POLR3B/RPC2, POLR1C/RPAC1, POLR1D/RPAC2, POLR3K/RPC10, POLR2E/RPABC1, POLR2F/RPABC2, POLR2H/RPABC3, POLR2K/RPABC4 and POLR2L/RPABC5; a mobile stalk composed of two subunits POLR3H/RPC8 and CRCP/RPC9, protruding from the core and functioning primarily in transcription initiation; and additional subunits homologous to general transcription factors of the RNA polymerase II machinery, POLR3C/RPC3-POLR3F/RPC6-POLR3G/RPC7 heterotrimer required for transcription initiation and POLR3D/RPC4-POLR3E/RPC5 heterodimer involved in both transcription initiation and termination. Directly interacts with POLR3C/RPC62. Also found in a trimeric complex with POLR3C/RPC3 and POLR3GL. In terms of tissue distribution, barely detectable in differentiated tissues. Expressed in embryonic stem cells and in other dividing cells, such as some tumor cell lines.

It localises to the nucleus. The protein resides in the cytoplasm. DNA-dependent RNA polymerase catalyzes the transcription of DNA into RNA using the four ribonucleoside triphosphates as substrates. Specific peripheric component of RNA polymerase III (Pol III) which synthesizes small non-coding RNAs including 5S rRNA, snRNAs, tRNAs and miRNAs from at least 500 distinct genomic loci. Acts as a long tether that bridges POLR3C/RPC3-POLR3F/RPC6-POLR3G/RPC7 heterotrimer and the mobile stalk of Pol III, coordinating the dynamics of Pol III stalk and clamp modules during the transition from apo to elongation state. Pol III exists as two alternative complexes defined by the mutually exclusive incorporation of subunit POLR3G/RPC7alpha or POLR3GL/RPC7beta. POLR3G/RPC7alpha modulates Pol III transcriptome by specifically enhancing the transcription of snaR-A non-coding RNAs. At resting state, occupies the active site of apo Pol III and keeps Pol III in an autoinhibitory mode, preventing non-specific transcription. Pol III plays a key role in sensing and limiting infection by intracellular bacteria and DNA viruses. Acts as a nuclear and cytosolic DNA sensor involved in innate immune response. Can sense non-self dsDNA that serves as template for transcription into dsRNA. The non-self RNA polymerase III transcripts, such as Epstein-Barr virus-encoded RNAs (EBERs), induce type I interferon and NF-kappa-B through the RIG-I pathway. The polypeptide is DNA-directed RNA polymerase III subunit RPC7 (Homo sapiens (Human)).